The following is a 370-amino-acid chain: Molybdenum import ATP-binding protein ModC (370 aa).

An ABC transporter domain is found at 1–232 (MLDIDVLRQQ…PDIPDFAAQR (232 aa)). An ATP-binding site is contributed by 30–37 (GRSGAGKT). One can recognise a Mop domain in the interval 292–363 (MVSVQNILAA…IKAMSLLRDE (72 aa)).

It belongs to the ABC transporter superfamily. Molybdate importer (TC 3.A.1.8) family. The complex is composed of two ATP-binding proteins (ModC), two transmembrane proteins (ModB) and a solute-binding protein (ModA).

It is found in the cell inner membrane. The enzyme catalyses molybdate(out) + ATP + H2O = molybdate(in) + ADP + phosphate + H(+). Part of the ABC transporter complex ModABC involved in molybdenum import. Responsible for energy coupling to the transport system. This Rhodospirillum rubrum (strain ATCC 11170 / ATH 1.1.1 / DSM 467 / LMG 4362 / NCIMB 8255 / S1) protein is Molybdenum import ATP-binding protein ModC.